Consider the following 214-residue polypeptide: Variable small protein 24 (214 aa).

An N-terminal signal peptide occupies residues 1-18 (MRKRISAIIMTLFMVFMS). The N-palmitoyl cysteine moiety is linked to residue cysteine 19. A lipid anchor (S-diacylglycerol cysteine) is attached at cysteine 19. The segment at 146–172 (TELGKKDASDDDTKKAIKKDNSDKTKG) is disordered.

Belongs to the variable small protein (Vsp) family.

It localises to the cell outer membrane. Functionally, the Vlp and Vsp proteins are antigenically distinct proteins, only one vlp or vsp gene is transcriptionally active at any one time. Switching between these genes is a mechanism of host immune response evasion. This is Variable small protein 24 from Borrelia hermsii.